The following is a 176-amino-acid chain: ATP-dependent protease subunit HslV (176 aa).

Thr6 is an active-site residue. Residues Ser161, Cys164, and Thr167 each contribute to the Na(+) site.

It belongs to the peptidase T1B family. HslV subfamily. In terms of assembly, a double ring-shaped homohexamer of HslV is capped on each side by a ring-shaped HslU homohexamer. The assembly of the HslU/HslV complex is dependent on binding of ATP.

The protein localises to the cytoplasm. It catalyses the reaction ATP-dependent cleavage of peptide bonds with broad specificity.. Allosterically activated by HslU binding. In terms of biological role, protease subunit of a proteasome-like degradation complex believed to be a general protein degrading machinery. This chain is ATP-dependent protease subunit HslV, found in Aquifex aeolicus (strain VF5).